A 460-amino-acid polypeptide reads, in one-letter code: Bifunctional protein GlmU (460 aa).

The interval 1–229 (MTNYAIILAA…FNESLGVNDR (229 aa)) is pyrophosphorylase. Residues 8–11 (LAAG), K22, Q72, and 77–78 (GT) contribute to the UDP-N-acetyl-alpha-D-glucosamine site. D102 lines the Mg(2+) pocket. UDP-N-acetyl-alpha-D-glucosamine is bound by residues G139, E154, N169, and N227. N227 is a Mg(2+) binding site. The segment at 230-250 (VALATAETVMRQRITQKHMVN) is linker. An N-acetyltransferase region spans residues 251–460 (GVTFQNPETV…RLAHHPSRSK (210 aa)). UDP-N-acetyl-alpha-D-glucosamine is bound by residues R332 and K350. Residue H362 is the Proton acceptor of the active site. UDP-N-acetyl-alpha-D-glucosamine contacts are provided by Y365 and N376. Residues A379, 385–386 (NY), S404, A422, and R439 contribute to the acetyl-CoA site.

In the N-terminal section; belongs to the N-acetylglucosamine-1-phosphate uridyltransferase family. It in the C-terminal section; belongs to the transferase hexapeptide repeat family. Homotrimer. The cofactor is Mg(2+).

It localises to the cytoplasm. The enzyme catalyses alpha-D-glucosamine 1-phosphate + acetyl-CoA = N-acetyl-alpha-D-glucosamine 1-phosphate + CoA + H(+). It catalyses the reaction N-acetyl-alpha-D-glucosamine 1-phosphate + UTP + H(+) = UDP-N-acetyl-alpha-D-glucosamine + diphosphate. The protein operates within nucleotide-sugar biosynthesis; UDP-N-acetyl-alpha-D-glucosamine biosynthesis; N-acetyl-alpha-D-glucosamine 1-phosphate from alpha-D-glucosamine 6-phosphate (route II): step 2/2. Its pathway is nucleotide-sugar biosynthesis; UDP-N-acetyl-alpha-D-glucosamine biosynthesis; UDP-N-acetyl-alpha-D-glucosamine from N-acetyl-alpha-D-glucosamine 1-phosphate: step 1/1. It functions in the pathway bacterial outer membrane biogenesis; LPS lipid A biosynthesis. Its function is as follows. Catalyzes the last two sequential reactions in the de novo biosynthetic pathway for UDP-N-acetylglucosamine (UDP-GlcNAc). The C-terminal domain catalyzes the transfer of acetyl group from acetyl coenzyme A to glucosamine-1-phosphate (GlcN-1-P) to produce N-acetylglucosamine-1-phosphate (GlcNAc-1-P), which is converted into UDP-GlcNAc by the transfer of uridine 5-monophosphate (from uridine 5-triphosphate), a reaction catalyzed by the N-terminal domain. This chain is Bifunctional protein GlmU, found in Streptococcus pyogenes serotype M6 (strain ATCC BAA-946 / MGAS10394).